The chain runs to 358 residues: Phospho-N-acetylmuramoyl-pentapeptide-transferase (358 aa).

A run of 10 helical transmembrane segments spans residues 27-47 (LFNN…SLFA), 81-101 (MGGV…TINL), 106-126 (LFLL…DDYL), 147-167 (VISI…PLVI), 171-191 (SWVI…LVGI), 201-221 (LDGL…TEIL), 228-248 (LFVF…FLKY), 255-275 (IFMG…IALL), 278-298 (SVFT…SVII), and 336-356 (IVEN…VLKI).

Belongs to the glycosyltransferase 4 family. MraY subfamily. It depends on Mg(2+) as a cofactor.

It is found in the cell inner membrane. It catalyses the reaction UDP-N-acetyl-alpha-D-muramoyl-L-alanyl-gamma-D-glutamyl-meso-2,6-diaminopimeloyl-D-alanyl-D-alanine + di-trans,octa-cis-undecaprenyl phosphate = di-trans,octa-cis-undecaprenyl diphospho-N-acetyl-alpha-D-muramoyl-L-alanyl-D-glutamyl-meso-2,6-diaminopimeloyl-D-alanyl-D-alanine + UMP. The protein operates within cell wall biogenesis; peptidoglycan biosynthesis. Catalyzes the initial step of the lipid cycle reactions in the biosynthesis of the cell wall peptidoglycan: transfers peptidoglycan precursor phospho-MurNAc-pentapeptide from UDP-MurNAc-pentapeptide onto the lipid carrier undecaprenyl phosphate, yielding undecaprenyl-pyrophosphoryl-MurNAc-pentapeptide, known as lipid I. This chain is Phospho-N-acetylmuramoyl-pentapeptide-transferase, found in Prochlorococcus marinus (strain MIT 9215).